A 640-amino-acid polypeptide reads, in one-letter code: Influenza virus NS1A-binding protein homolog B (640 aa).

One can recognise a BTB domain in the interval 32-100; sequence CDVRLLVCGH…AYTAQLKADK (69 aa). A BACK domain is found at 135 to 186; that stretch reads AISYRNFASSMADGRLLGKIDGYIQDHLHEISEQDDFLKLPRLKLEVMLEDN. Residues 257 to 278 form a disordered region; it reads KKPPRERDEMGSGASGSISPSN. Low complexity predominate over residues 267 to 278; the sequence is GSGASGSISPSN. Kelch repeat units lie at residues 366–412, 413–460, 462–509, 510–556, 557–603, and 605–640; these read KLIA…VLMG, EVYV…SLQN, LFVV…ELSG, YMYV…VYEG, KLFV…VLNN, and LCAV…LGKN.

It localises to the cytoplasm. It is found in the cytoskeleton. The protein localises to the nucleus. Plays a role in cell division and in the dynamic organization of the actin skeleton as a stabilizer of actin filaments by association with F-actin through Kelch repeats. This Danio rerio (Zebrafish) protein is Influenza virus NS1A-binding protein homolog B (ivns1abpb).